We begin with the raw amino-acid sequence, 438 residues long: MDLGTTKYIIYTELIADGYVEKHDVIGAIFGQTEGLLSNELDLRDLQKSGRIGRIDVDLENINGKSFAKITLPSSLDKVETSILAATLETIDRVGPCFATVKITEVEDIRVSKRQYITNRARSILRKLMDEMIDTYEITEEIKESLRTEEIMEYGPENLPCGPNVVHSDSIIVVEGRADVLNLLRCGIKNTVAVEGTSVPKSIMELTKKKTTTAFTDGDRGGELILKELLQTCDIDYVARAPYGKEVEGTSKKEIMKCLRSKVPVEQIVGNTCNDACNVSKVIEDTPKEIFEPVTHKYYEKVETPVIEPVFEGPVVEEEIVVVEPVKKTETEIIDVDATNEIQADRKFSGVKEIVDSIKNTGNVKFVVDGTEKTNTFKEFLTNIHEIKKMDFFAADMPISQKIVDLLYDKTPIIVGKEINVTKKPVNLRLFSFDEIVA.

The Toprim domain maps to 169–243 (DSIIVVEGRA…DIDYVARAPY (75 aa)). Positions 175, 217, and 219 each coordinate Mg(2+).

Belongs to the archaeal DnaG primase family. In terms of assembly, forms a ternary complex with MCM helicase and DNA. Mg(2+) serves as cofactor.

It catalyses the reaction ssDNA + n NTP = ssDNA/pppN(pN)n-1 hybrid + (n-1) diphosphate.. RNA polymerase that catalyzes the synthesis of short RNA molecules used as primers for DNA polymerase during DNA replication. This chain is DNA primase DnaG, found in Methanococcus maripaludis (strain C5 / ATCC BAA-1333).